The following is a 350-amino-acid chain: MGKGGALSDGVIKKILLSYTYVAIWIFLSFTVIVYNKYILDKKMYNWPFPITLTMIHMAFCSSLAVILIKVFKIVEPVSMSRDTYIRSVVPIGALYSLSLWLSNSAYIYLSVSFIQMLKALMPVAVYSIGVLLKKESFKSETMTNMLSISFGVAIAAYGEAKFDTWGVMLQLGAVAFEATRLVLIQILLTSKGINLNPITSLYYVAPCCLVFLFFPWIFVELPILRETSSFHFDFVIFGTNSVCAFALNLAVFLLVGKTSALTMNVAGVVKDWLLIAFSWSVIKDTVTPLNLFGYGLAFLGVAYYNHCKLQALKAKDAQKKVQQGDEEEAGKLLEERESEAAAKRNETED.

Helical transmembrane passes span 15 to 35 (ILLSYTYVAIWIFLSFTVIVY), 49 to 69 (FPITLTMIHMAFCSSLAVILI), 89 to 109 (VVPIGALYSLSLWLSNSAYIY), 112 to 132 (VSFIQMLKALMPVAVYSIGVL), 146 to 166 (MLSISFGVAIAAYGEAKFDTW), 168 to 188 (VMLQLGAVAFEATRLVLIQIL), 205 to 225 (VAPCCLVFLFFPWIFVELPIL), 235 to 255 (FVIFGTNSVCAFALNLAVFLL), 263 to 283 (TMNVAGVVKDWLLIAFSWSVI), and 286 to 306 (TVTPLNLFGYGLAFLGVAYYN). An EamA domain is found at 38–155 (YILDKKMYNW…MLSISFGVAI (118 aa)). A disordered region spans residues 324–350 (QGDEEEAGKLLEERESEAAAKRNETED).

The protein belongs to the TPT transporter family. TPT (TC 2.A.7.9) subfamily.

The protein resides in the membrane. The chain is Probable sugar phosphate/phosphate translocator At4g32390 from Arabidopsis thaliana (Mouse-ear cress).